The primary structure comprises 178 residues: Cysteine protease inhibitor 7 (178 aa).

Cystine bridges form between Cys-41-Cys-93 and Cys-141-Cys-147.

This sequence belongs to the protease inhibitor I3 (leguminous Kunitz-type inhibitor) family.

It is found in the vacuole. In terms of biological role, inhibitor of cysteine proteases. May protect the plant by inhibiting proteases of invading organisms. The sequence is that of Cysteine protease inhibitor 7 from Solanum tuberosum (Potato).